The chain runs to 599 residues: Elongation factor 4 (599 aa).

Residues 4–186 enclose the tr-type G domain; it reads SKIRNFSIIA…SIVEKVPAPK (183 aa). GTP contacts are provided by residues 16–21 and 133–136; these read DHGKST and NKVD.

Belongs to the TRAFAC class translation factor GTPase superfamily. Classic translation factor GTPase family. LepA subfamily.

Its subcellular location is the cell inner membrane. The enzyme catalyses GTP + H2O = GDP + phosphate + H(+). Its function is as follows. Required for accurate and efficient protein synthesis under certain stress conditions. May act as a fidelity factor of the translation reaction, by catalyzing a one-codon backward translocation of tRNAs on improperly translocated ribosomes. Back-translocation proceeds from a post-translocation (POST) complex to a pre-translocation (PRE) complex, thus giving elongation factor G a second chance to translocate the tRNAs correctly. Binds to ribosomes in a GTP-dependent manner. The sequence is that of Elongation factor 4 from Syntrophotalea carbinolica (strain DSM 2380 / NBRC 103641 / GraBd1) (Pelobacter carbinolicus).